The primary structure comprises 233 residues: Large ribosomal subunit protein uL1 (233 aa).

It belongs to the universal ribosomal protein uL1 family. In terms of assembly, part of the 50S ribosomal subunit.

In terms of biological role, binds directly to 23S rRNA. The L1 stalk is quite mobile in the ribosome, and is involved in E site tRNA release. Functionally, protein L1 is also a translational repressor protein, it controls the translation of the L11 operon by binding to its mRNA. This chain is Large ribosomal subunit protein uL1, found in Campylobacter concisus (strain 13826).